A 372-amino-acid polypeptide reads, in one-letter code: tRNA-specific 2-thiouridylase MnmA (372 aa).

ATP contacts are provided by residues 7-14 (GLSGGVDS) and Met-33. Residues 104-106 (NPD) form an interaction with target base in tRNA region. The active-site Nucleophile is the Cys-109. Residues Cys-109 and Cys-202 are joined by a disulfide bond. Residue Gly-134 participates in ATP binding. The tract at residues 152–154 (KDQ) is interaction with tRNA. Cys-202 serves as the catalytic Cysteine persulfide intermediate. An interaction with tRNA region spans residues 310-311 (RY).

It belongs to the MnmA/TRMU family.

It is found in the cytoplasm. The catalysed reaction is S-sulfanyl-L-cysteinyl-[protein] + uridine(34) in tRNA + AH2 + ATP = 2-thiouridine(34) in tRNA + L-cysteinyl-[protein] + A + AMP + diphosphate + H(+). Catalyzes the 2-thiolation of uridine at the wobble position (U34) of tRNA, leading to the formation of s(2)U34. This Mesomycoplasma hyopneumoniae (strain 232) (Mycoplasma hyopneumoniae) protein is tRNA-specific 2-thiouridylase MnmA.